The sequence spans 456 residues: 26S proteasome non-ATPase regulatory subunit 12 (456 aa).

Position 2 is an N-acetylalanine (Ala-2). Lys-92 participates in a covalent cross-link: Glycyl lysine isopeptide (Lys-Gly) (interchain with G-Cter in SUMO1); alternate. Residue Lys-92 forms a Glycyl lysine isopeptide (Lys-Gly) (interchain with G-Cter in SUMO2); alternate linkage. The 179-residue stretch at 242–420 folds into the PCI domain; that stretch reads SICKHYRAIY…GVINFQRPKD (179 aa). Lys-368 carries the N6-acetyllysine modification.

It belongs to the proteasome subunit p55 family. In terms of assembly, component of the 19S proteasome regulatory particle complex. The 26S proteasome consists of a 20S core particle (CP) and two 19S regulatory subunits (RP). The regulatory particle is made of a lid composed of 9 subunits including PSMD12, a base containing 6 ATPases and few additional components. Interacts with ERCC6.

Its function is as follows. Component of the 26S proteasome, a multiprotein complex involved in the ATP-dependent degradation of ubiquitinated proteins. This complex plays a key role in the maintenance of protein homeostasis by removing misfolded or damaged proteins, which could impair cellular functions, and by removing proteins whose functions are no longer required. Therefore, the proteasome participates in numerous cellular processes, including cell cycle progression, apoptosis, or DNA damage repair. The chain is 26S proteasome non-ATPase regulatory subunit 12 (Psmd12) from Mus musculus (Mouse).